We begin with the raw amino-acid sequence, 231 residues long: Orotidine 5'-phosphate decarboxylase (231 aa).

Substrate-binding positions include Asp-11, Lys-33, 60–69, Thr-119, Arg-180, Gln-189, Gly-209, and Arg-210; that span reads DLKFHDIPNT. Lys-62 (proton donor) is an active-site residue.

It belongs to the OMP decarboxylase family. Type 1 subfamily. As to quaternary structure, homodimer.

It carries out the reaction orotidine 5'-phosphate + H(+) = UMP + CO2. The protein operates within pyrimidine metabolism; UMP biosynthesis via de novo pathway; UMP from orotate: step 2/2. Catalyzes the decarboxylation of orotidine 5'-monophosphate (OMP) to uridine 5'-monophosphate (UMP). In Idiomarina loihiensis (strain ATCC BAA-735 / DSM 15497 / L2-TR), this protein is Orotidine 5'-phosphate decarboxylase.